A 412-amino-acid chain; its full sequence is Poly-beta-1,6-N-acetyl-D-glucosamine synthase (412 aa).

4 consecutive transmembrane segments (helical) span residues 6-28 (FLLF…FYFT), 290-312 (LYIL…LYLG), 332-354 (IFLL…ALFI), and 366-388 (LIFV…LVAF).

The protein belongs to the glycosyltransferase 2 family.

It localises to the cell membrane. Its function is as follows. N-acetylglucosaminyltransferase that catalyzes the polymerization of single monomer units of UDP-N-acetylglucosamine to produce the linear homomer poly-beta-1,6-N-acetyl-D-glucosamine (PNAG, also referred to as PIA), a biofilm adhesin polysaccharide. Requires IcaD for full activity. This chain is Poly-beta-1,6-N-acetyl-D-glucosamine synthase (icaA), found in Staphylococcus aureus (strain MSSA476).